The following is a 479-amino-acid chain: Aspartyl/glutamyl-tRNA(Asn/Gln) amidotransferase subunit B (479 aa).

It belongs to the GatB/GatE family. GatB subfamily. In terms of assembly, heterotrimer of A, B and C subunits.

It catalyses the reaction L-glutamyl-tRNA(Gln) + L-glutamine + ATP + H2O = L-glutaminyl-tRNA(Gln) + L-glutamate + ADP + phosphate + H(+). The catalysed reaction is L-aspartyl-tRNA(Asn) + L-glutamine + ATP + H2O = L-asparaginyl-tRNA(Asn) + L-glutamate + ADP + phosphate + 2 H(+). Its function is as follows. Allows the formation of correctly charged Asn-tRNA(Asn) or Gln-tRNA(Gln) through the transamidation of misacylated Asp-tRNA(Asn) or Glu-tRNA(Gln) in organisms which lack either or both of asparaginyl-tRNA or glutaminyl-tRNA synthetases. The reaction takes place in the presence of glutamine and ATP through an activated phospho-Asp-tRNA(Asn) or phospho-Glu-tRNA(Gln). The chain is Aspartyl/glutamyl-tRNA(Asn/Gln) amidotransferase subunit B from Streptococcus pyogenes serotype M5 (strain Manfredo).